We begin with the raw amino-acid sequence, 309 residues long: Serpentine receptor class gamma-47 (309 aa).

The next 5 helical transmembrane spans lie at I22–F42, F140–L160, I190–I210, L230–A250, and I272–I292.

This sequence belongs to the nematode receptor-like protein srg family.

It is found in the membrane. The polypeptide is Serpentine receptor class gamma-47 (srg-47) (Caenorhabditis elegans).